Consider the following 340-residue polypeptide: N-acetyl-gamma-glutamyl-phosphate reductase (340 aa).

Cys-146 is a catalytic residue.

The protein belongs to the NAGSA dehydrogenase family. Type 1 subfamily.

Its subcellular location is the cytoplasm. The catalysed reaction is N-acetyl-L-glutamate 5-semialdehyde + phosphate + NADP(+) = N-acetyl-L-glutamyl 5-phosphate + NADPH + H(+). The protein operates within amino-acid biosynthesis; L-arginine biosynthesis; N(2)-acetyl-L-ornithine from L-glutamate: step 3/4. In terms of biological role, catalyzes the NADPH-dependent reduction of N-acetyl-5-glutamyl phosphate to yield N-acetyl-L-glutamate 5-semialdehyde. The protein is N-acetyl-gamma-glutamyl-phosphate reductase of Streptococcus thermophilus (strain ATCC BAA-491 / LMD-9).